We begin with the raw amino-acid sequence, 135 residues long: ATP synthase epsilon chain 1 (135 aa).

Belongs to the ATPase epsilon chain family. In terms of assembly, F-type ATPases have 2 components, CF(1) - the catalytic core - and CF(0) - the membrane proton channel. CF(1) has five subunits: alpha(3), beta(3), gamma(1), delta(1), epsilon(1). CF(0) has three main subunits: a, b and c.

It localises to the cell inner membrane. In terms of biological role, produces ATP from ADP in the presence of a proton gradient across the membrane. The protein is ATP synthase epsilon chain 1 of Nitrobacter hamburgensis (strain DSM 10229 / NCIMB 13809 / X14).